We begin with the raw amino-acid sequence, 731 residues long: Golgin subfamily A member 5 (731 aa).

The residue at position 2 (Ser2) is an N-acetylserine. The Cytoplasmic segment spans residues 2-698 (SWFVDLAGKA…IFLRRYPIAR (697 aa)). Arg89 carries the dimethylated arginine modification. The segment at 93–222 (EASHPVENAS…PTPNDDGKSH (130 aa)) is disordered. Ser116 carries the post-translational modification Phosphoserine. Positions 134–146 (PTGRVEIRKEKGK) are enriched in basic and acidic residues. Residues 147 to 167 (TPVFQSSQTSSVSSVNPSVTT) are compositionally biased toward low complexity. The segment covering 173–188 (ENSFGSQTHEAASNSD) has biased composition (polar residues). Over residues 189–199 (SSHEGQEESSK) the composition is skewed to basic and acidic residues. Residues 216–632 (NDDGKSHELS…EQQMNSASGS (417 aa)) adopt a coiled-coil conformation. A helical; Anchor for type IV membrane protein membrane pass occupies residues 699–719 (VFVIIYMALLHLWVMIVLLTY). Residues 720–731 (TPEMHHDQPYGK) lie on the Lumenal side of the membrane.

Homodimer. Interacts with RAB1A that has been activated by GTP-binding, and possibly also with OCRL1. Interacts with isoform CASP of CUX1. Post-translationally, highly phosphorylated during mitosis. Phosphorylation is barely detectable during interphase. In terms of tissue distribution, ubiquitous. Highly expressed in seminiferous tubules and Leydig cells in testis, and detected at much lower levels in the other tissues tested. Expression is very low or not detectable in spermatozoa.

It is found in the golgi apparatus membrane. Its function is as follows. Involved in maintaining Golgi structure. Stimulates the formation of Golgi stacks and ribbons. Involved in intra-Golgi retrograde transport. This Homo sapiens (Human) protein is Golgin subfamily A member 5 (GOLGA5).